The chain runs to 425 residues: Trigger factor (425 aa).

The 86-residue stretch at 163 to 248 (GDTAVIDFEG…VHEIKTKELP (86 aa)) folds into the PPIase FKBP-type domain.

The protein belongs to the FKBP-type PPIase family. Tig subfamily.

The protein localises to the cytoplasm. It carries out the reaction [protein]-peptidylproline (omega=180) = [protein]-peptidylproline (omega=0). Its function is as follows. Involved in protein export. Acts as a chaperone by maintaining the newly synthesized protein in an open conformation. Functions as a peptidyl-prolyl cis-trans isomerase. The chain is Trigger factor from Bacillus cereus (strain Q1).